The following is a 320-amino-acid chain: UDP-N-acetylenolpyruvoylglucosamine reductase (320 aa).

The FAD-binding PCMH-type domain maps to 34–200 (RAGGLAEVFF…TSAVFEGFAE (167 aa)). R180 is a catalytic residue. S229 acts as the Proton donor in catalysis. The active site involves E299.

This sequence belongs to the MurB family. FAD serves as cofactor.

It localises to the cytoplasm. It catalyses the reaction UDP-N-acetyl-alpha-D-muramate + NADP(+) = UDP-N-acetyl-3-O-(1-carboxyvinyl)-alpha-D-glucosamine + NADPH + H(+). It functions in the pathway cell wall biogenesis; peptidoglycan biosynthesis. In terms of biological role, cell wall formation. The polypeptide is UDP-N-acetylenolpyruvoylglucosamine reductase (Mesorhizobium japonicum (strain LMG 29417 / CECT 9101 / MAFF 303099) (Mesorhizobium loti (strain MAFF 303099))).